A 294-amino-acid chain; its full sequence is Elongation factor Ts (294 aa).

Residues 81-84 are involved in Mg(2+) ion dislocation from EF-Tu; sequence TDFV.

Belongs to the EF-Ts family.

The protein resides in the cytoplasm. Its function is as follows. Associates with the EF-Tu.GDP complex and induces the exchange of GDP to GTP. It remains bound to the aminoacyl-tRNA.EF-Tu.GTP complex up to the GTP hydrolysis stage on the ribosome. The protein is Elongation factor Ts of Hydrogenovibrio crunogenus (strain DSM 25203 / XCL-2) (Thiomicrospira crunogena).